The following is an 85-amino-acid chain: Large ribosomal subunit protein bL31B (85 aa).

It belongs to the bacterial ribosomal protein bL31 family. Type B subfamily. As to quaternary structure, part of the 50S ribosomal subunit.

In Porphyromonas gingivalis (strain ATCC 33277 / DSM 20709 / CIP 103683 / JCM 12257 / NCTC 11834 / 2561), this protein is Large ribosomal subunit protein bL31B.